We begin with the raw amino-acid sequence, 162 residues long: Probable ergosterol biosynthetic protein 28 homolog (162 aa).

Helical transmembrane passes span 7-25 (AWMS…MCYA), 40-60 (LSRA…VLIF), 69-89 (IAHI…VFFY), and 96-116 (IVTV…LTFL).

Belongs to the ERG28 family. In terms of tissue distribution, expressed in tissues including muscles, intestine and neurons.

It is found in the endoplasmic reticulum membrane. The protein localises to the cell projection. It localises to the dendrite. Functionally, promotes the translocation of slo-1 potassium ion channels from the endoplasmic reticulum to its final destination at the plasma membrane, probably by shielding from premature proteasomal degradation in the endoplasmic reticulum. Maintains the levels of slo-1 potassium ion channel at the presynaptic neurons. This chain is Probable ergosterol biosynthetic protein 28 homolog, found in Caenorhabditis elegans.